Here is a 116-residue protein sequence, read N- to C-terminus: Methionine-R-sulfoxide reductase B1 (116 aa).

Residues M1–K106 enclose the MsrB domain. Zn(2+)-binding residues include C23, C26, C71, and C74. The Nucleophile role is filled by U95. A non-standard amino acid (selenocysteine) is located at residue U95.

This sequence belongs to the MsrB Met sulfoxide reductase family. The cofactor is Zn(2+). Post-translationally, truncated MSRB1/SEPX1 proteins produced by failed UGA/Sec decoding are ubiquitinated by the CRL2(FEM1C) E3 ubiquitin-protein ligase complex.

Its subcellular location is the cytoplasm. The protein localises to the nucleus. The protein resides in the cytoskeleton. It carries out the reaction L-methionyl-[protein] + [thioredoxin]-disulfide + H2O = L-methionyl-(R)-S-oxide-[protein] + [thioredoxin]-dithiol. The enzyme catalyses [thioredoxin]-disulfide + L-methionine + H2O = L-methionine (R)-S-oxide + [thioredoxin]-dithiol. Its function is as follows. Methionine-sulfoxide reductase that specifically reduces methionine (R)-sulfoxide back to methionine. While in many cases, methionine oxidation is the result of random oxidation following oxidative stress, methionine oxidation is also a post-translational modification that takes place on specific residue. Acts as a regulator of actin assembly by reducing methionine (R)-sulfoxide mediated by MICALs (MICAL1, MICAL2 or MICAL3) on actin, thereby promoting filament repolymerization. Plays a role in innate immunity by reducing oxidized actin, leading to actin repolymerization in macrophages. This chain is Methionine-R-sulfoxide reductase B1 (MSRB1), found in Bos taurus (Bovine).